The following is a 156-amino-acid chain: Small ribosomal subunit protein uS7 (156 aa).

This sequence belongs to the universal ribosomal protein uS7 family. Part of the 30S ribosomal subunit. Contacts proteins S9 and S11.

Functionally, one of the primary rRNA binding proteins, it binds directly to 16S rRNA where it nucleates assembly of the head domain of the 30S subunit. Is located at the subunit interface close to the decoding center, probably blocks exit of the E-site tRNA. This is Small ribosomal subunit protein uS7 from Vibrio cholerae serotype O1 (strain ATCC 39315 / El Tor Inaba N16961).